The sequence spans 400 residues: GTPase Obg (400 aa).

Positions 1 to 159 (MKFVDEVQIR…RTLKLELLLL (159 aa)) constitute an Obg domain. One can recognise an OBG-type G domain in the interval 160-333 (ADVGMLGLPN…VCYDILDLLD (174 aa)). GTP-binding positions include 166–173 (GLPNAGKS), 191–195 (FTTLV), 213–216 (DIPG), 283–286 (NKMD), and 314–316 (SAI). S173 and T193 together coordinate Mg(2+).

This sequence belongs to the TRAFAC class OBG-HflX-like GTPase superfamily. OBG GTPase family. In terms of assembly, monomer. Mg(2+) is required as a cofactor.

The protein resides in the cytoplasm. Functionally, an essential GTPase which binds GTP, GDP and possibly (p)ppGpp with moderate affinity, with high nucleotide exchange rates and a fairly low GTP hydrolysis rate. Plays a role in control of the cell cycle, stress response, ribosome biogenesis and in those bacteria that undergo differentiation, in morphogenesis control. The polypeptide is GTPase Obg (Aeromonas salmonicida (strain A449)).